Reading from the N-terminus, the 691-residue chain is Zinc finger protein 770 (691 aa).

Lys11 participates in a covalent cross-link: Glycyl lysine isopeptide (Lys-Gly) (interchain with G-Cter in SUMO2). 3 consecutive C2H2-type zinc fingers follow at residues Tyr27–His49, Phe55–His77, and Phe81–His103. Glycyl lysine isopeptide (Lys-Gly) (interchain with G-Cter in SUMO2) cross-links involve residues Lys112, Lys121, and Lys146. C2H2-type zinc fingers lie at residues His160–His182, Phe188–His210, and Phe216–His238. The disordered stretch occupies residues Pro258–Glu277. Lys262 participates in a covalent cross-link: Glycyl lysine isopeptide (Lys-Gly) (interchain with G-Cter in SUMO2). A C2H2-type 7; degenerate zinc finger spans residues Phe294 to Arg318. Glycyl lysine isopeptide (Lys-Gly) (interchain with G-Cter in SUMO2) cross-links involve residues Lys420 and Lys437. 4 C2H2-type zinc fingers span residues Cys475–His497, Phe503–His525, Tyr625–His647, and Phe653–His675. Residue Lys683 forms a Glycyl lysine isopeptide (Lys-Gly) (interchain with G-Cter in SUMO2) linkage.

It belongs to the krueppel C2H2-type zinc-finger protein family.

It localises to the nucleus. Its function is as follows. May be involved in transcriptional regulation. The chain is Zinc finger protein 770 (ZNF770) from Homo sapiens (Human).